Here is a 455-residue protein sequence, read N- to C-terminus: Adhesin YadA (455 aa).

Positions 1-25 (MTKDFKISVSAALISALFSSPYAFA) are cleaved as a signal peptide. The segment at 26–363 (DDYDGIPNLT…KKAIRESNQY (338 aa)) is surface exposed passenger domain. A coiled-coil region spans residues 209–243 (VNVAQLKKEIEKTQENTNKRSAELLANANAYADNK). An outer membrane translocation of the passenger domain region spans residues 364–402 (TDHKFRQLDNRLDKLDTRVDKGLASSAALNSLFQPYGVG). The next 4 membrane-spanning stretches (beta stranded) occupy residues 402–412 (GKVNFTAGVGG), 416–427 (SQALAIGSGYRV), 434–440 (KAGVAYA), and 444–455 (DVMYNASFNIEW). A translocator domain region spans residues 403–455 (KVNFTAGVGGYRSSQALAIGSGYRVNENVALKAGVAYAGSSDVMYNASFNIEW).

It belongs to the autotransporter-2 (AT-2) (TC 1.B.40) family. Homotrimer; in gels migrates as monomers, dimers and homotrimers. Does not form trimers with distantly related EibA from E.coli; coexpression was lethal and one of the genes is eliminated in vivo. If the full translocator domain (368-455) is exchanged with that of EibA ('299-392'), will form heterotrimers with EibA and vice-versa.

It localises to the cell surface. It is found in the cell outer membrane. Functionally, collagen-binding outer membrane protein forming a fibrillar matrix on the bacterial cell surface. Promotes initial attachment and invasion of eukaryotic cells. Also protects the bacteria by being responsible for agglutination, serum resistance, complement inactivation and phagocytosis resistance. The protein is Adhesin YadA (yadA) of Yersinia enterocolitica.